The sequence spans 160 residues: Serine-protein kinase RsbW (160 aa).

Belongs to the anti-sigma-factor family.

It catalyses the reaction L-seryl-[protein] + ATP = O-phospho-L-seryl-[protein] + ADP + H(+). The catalysed reaction is L-threonyl-[protein] + ATP = O-phospho-L-threonyl-[protein] + ADP + H(+). Functionally, negative regulator of sigma-B activity. Phosphorylates and inactivates its specific antagonist protein, RsbV. Upon phosphorylation of RsbV, RsbW is released and binds to sigma-B, thereby blocking its ability to form an RNA polymerase holoenzyme (E-sigma-B). This chain is Serine-protein kinase RsbW, found in Bacillus cereus (strain ATCC 10987 / NRS 248).